Here is a 245-residue protein sequence, read N- to C-terminus: NAD-dependent protein deacylase (245 aa).

In terms of domain architecture, Deacetylase sirtuin-type spans 1–237; it reads MNFPYRNIVV…PKLVEELLAH (237 aa). NAD(+) is bound at residue 13 to 32; sequence GAGISAESGIQTFRAQDGLW. Positions 57 and 60 each coordinate substrate. 94–97 serves as a coordination point for NAD(+); it reads QNID. The active-site Proton acceptor is the His-112. Residues Cys-120 and Cys-139 each contribute to the Zn(2+) site. NAD(+) contacts are provided by residues 179-181, 205-207, and Ala-223; these read GTS and NLE.

The protein belongs to the sirtuin family. Class III subfamily. Requires Zn(2+) as cofactor.

It localises to the cytoplasm. The catalysed reaction is N(6)-acetyl-L-lysyl-[protein] + NAD(+) + H2O = 2''-O-acetyl-ADP-D-ribose + nicotinamide + L-lysyl-[protein]. The enzyme catalyses N(6)-succinyl-L-lysyl-[protein] + NAD(+) + H2O = 2''-O-succinyl-ADP-D-ribose + nicotinamide + L-lysyl-[protein]. Functionally, NAD-dependent lysine deacetylase and desuccinylase that specifically removes acetyl and succinyl groups on target proteins. Modulates the activities of several proteins which are inactive in their acylated form. This chain is NAD-dependent protein deacylase, found in Vibrio vulnificus (strain CMCP6).